The following is a 252-amino-acid chain: Fluoroquinolones export permease protein MT2760 (252 aa).

6 helical membrane-spanning segments follow: residues 31 to 51 (VMLV…TPLF), 69 to 89 (LILT…LAAF), 119 to 139 (ATVM…SGIL), 148 to 168 (IPIG…ILAV), 176 to 196 (LAMV…PWFI), and 224 to 244 (TWWP…WVLF).

The complex is composed of 2 ATP-binding proteins and 2 transmembrane proteins.

The protein resides in the cell membrane. In terms of biological role, part of the ABC transporter complex involved in fluoroquinolones export. Probably responsible for the translocation of the substrate across the membrane. The polypeptide is Fluoroquinolones export permease protein MT2760 (Mycobacterium tuberculosis (strain CDC 1551 / Oshkosh)).